The primary structure comprises 157 residues: CASP-like protein 1 (157 aa).

At 1 to 13 (MKTEARDGGSEWR) the chain is on the cytoplasmic side. The chain crosses the membrane as a helical span at residues 14–34 (WVAIFELFLRLAAIVSTSVAV). Residues 35–40 (YAAMGK) lie on the Extracellular side of the membrane. The helical transmembrane segment at 41–61 (IFVVAVNGVACFYLLMSLPVS) threads the bilayer. Over 62 to 82 (IFNIMRPHAYPANRVFLNIMD) the chain is Cytoplasmic. A helical transmembrane segment spans residues 83-103 (MVMVALVTAGALAAGIVYLVE). At 104–121 (KAGNARASWVSVWSQFDS) the chain is on the extracellular side. A helical transmembrane segment spans residues 122–142 (SSCFAVLALILHVLLSGVILY). The Cytoplasmic portion of the chain corresponds to 143-157 (KQALNIKFKKLDSVD).

The protein belongs to the Casparian strip membrane proteins (CASP) family. Homodimer and heterodimers.

The protein localises to the cell membrane. The polypeptide is CASP-like protein 1 (Picea sitchensis (Sitka spruce)).